Here is a 636-residue protein sequence, read N- to C-terminus: Chaperone protein DnaK (636 aa).

Threonine 197 carries the post-translational modification Phosphothreonine; by autocatalysis. Residues 596–607 (LYQQAQEQQQSG) show a composition bias toward low complexity. The segment at 596–636 (LYQQAQEQQQSGSSGGSSDEDVVEDAEIVDEEDEEKRDDNR) is disordered. Residues 613-636 (SDEDVVEDAEIVDEEDEEKRDDNR) are compositionally biased toward acidic residues.

It belongs to the heat shock protein 70 family.

Its function is as follows. Acts as a chaperone. This chain is Chaperone protein DnaK, found in Rubrobacter xylanophilus (strain DSM 9941 / JCM 11954 / NBRC 16129 / PRD-1).